The chain runs to 1282 residues: Clustered mitochondria protein homolog (1282 aa).

Residues 1–50 (MADASQATTPAAEGNPVPEVPETQTPPADVNGTTEQEQTEEGAEQALEDQ) are disordered. Residues 16–36 (PVPEVPETQTPPADVNGTTEQ) are compositionally biased toward low complexity. Residues 37–47 (EQTEEGAEQAL) show a composition bias toward acidic residues. The Clu domain occupies 331–575 (DNTRSQETYL…RITPLDIAWM (245 aa)). Positions 623–650 (EEKKEGEEATEEAKTEEIKTEEAEKSEE) form a coiled coil. Basic and acidic residues-rich tracts occupy residues 624 to 661 (EKKEGEEATEEAKTEEIKTEEAEKSEEPKAEETEKTEE) and 668 to 680 (VAEKKDEEAAKED). Disordered stretches follow at residues 624–680 (EKKE…AKED) and 913–945 (PVAEKPVAPAPAPVEDGNKKKKKKKAARETSPV). TPR repeat units lie at residues 1021-1054 (AQMYHTLSQLYYQLGQKDAAVELSRKAAIVAERT), 1063-1096 (VLNYLNLSLFLHQRGDSKEALLYARHALDLWKVI), and 1105-1138 (ITTMNNYAVMLQSIKAYHESRRWFEESLRVCNKV). The tract at residues 1257 to 1282 (VENSEKKKGGKKSKGPSNPKKRGGKA) is disordered. A compositionally biased stretch (basic residues) spans 1264–1282 (KGGKKSKGPSNPKKRGGKA).

This sequence belongs to the CLU family. May associate with the eukaryotic translation initiation factor 3 (eIF-3) complex.

It localises to the cytoplasm. Functionally, mRNA-binding protein involved in proper cytoplasmic distribution of mitochondria. This Neurospora crassa (strain ATCC 24698 / 74-OR23-1A / CBS 708.71 / DSM 1257 / FGSC 987) protein is Clustered mitochondria protein homolog.